The primary structure comprises 274 residues: Large ribosomal subunit protein uL2cz/uL2cy (274 aa).

The segment covering Met-1–Asn-15 has biased composition (polar residues). Disordered stretches follow at residues Met-1 to Val-22 and Pro-225 to Lys-274.

The protein belongs to the universal ribosomal protein uL2 family. Part of the 50S ribosomal subunit.

The protein resides in the plastid. Its subcellular location is the chloroplast. The polypeptide is Large ribosomal subunit protein uL2cz/uL2cy (rpl2-A) (Lobularia maritima (Sweet alyssum)).